The primary structure comprises 270 residues: Glutamate racemase (270 aa).

Substrate is bound by residues aspartate 10–serine 11 and tyrosine 42–glycine 43. The Proton donor/acceptor role is filled by cysteine 73. Substrate is bound at residue asparagine 74–threonine 75. The active-site Proton donor/acceptor is the cysteine 184. Threonine 185–histidine 186 is a binding site for substrate.

It belongs to the aspartate/glutamate racemases family.

It carries out the reaction L-glutamate = D-glutamate. It functions in the pathway cell wall biogenesis; peptidoglycan biosynthesis. In terms of biological role, provides the (R)-glutamate required for cell wall biosynthesis. In Geobacter metallireducens (strain ATCC 53774 / DSM 7210 / GS-15), this protein is Glutamate racemase.